A 324-amino-acid polypeptide reads, in one-letter code: Acetyl-coenzyme A carboxylase carboxyl transferase subunit alpha (324 aa).

The CoA carboxyltransferase C-terminal domain occupies 44–298 (QLEAKATQLR…KTAIVKSLDD (255 aa)).

Belongs to the AccA family. As to quaternary structure, acetyl-CoA carboxylase is a heterohexamer composed of biotin carboxyl carrier protein (AccB), biotin carboxylase (AccC) and two subunits each of ACCase subunit alpha (AccA) and ACCase subunit beta (AccD).

Its subcellular location is the cytoplasm. It carries out the reaction N(6)-carboxybiotinyl-L-lysyl-[protein] + acetyl-CoA = N(6)-biotinyl-L-lysyl-[protein] + malonyl-CoA. It functions in the pathway lipid metabolism; malonyl-CoA biosynthesis; malonyl-CoA from acetyl-CoA: step 1/1. Its function is as follows. Component of the acetyl coenzyme A carboxylase (ACC) complex. First, biotin carboxylase catalyzes the carboxylation of biotin on its carrier protein (BCCP) and then the CO(2) group is transferred by the carboxyltransferase to acetyl-CoA to form malonyl-CoA. The protein is Acetyl-coenzyme A carboxylase carboxyl transferase subunit alpha of Trichodesmium erythraeum (strain IMS101).